A 388-amino-acid chain; its full sequence is Na(+)/H(+) antiporter NhaA (388 aa).

12 consecutive transmembrane segments (helical) span residues phenylalanine 8 to isoleucine 28, proline 33 to leucine 53, leucine 59 to valine 79, leucine 95 to phenylalanine 115, glycine 125 to serine 145, valine 154 to phenylalanine 174, valine 179 to tryptophan 199, valine 217 to isoleucine 237, valine 259 to valine 279, isoleucine 287 to phenylalanine 307, isoleucine 328 to leucine 348, and leucine 363 to valine 383.

The protein belongs to the NhaA Na(+)/H(+) (TC 2.A.33) antiporter family.

Its subcellular location is the cell inner membrane. It catalyses the reaction Na(+)(in) + 2 H(+)(out) = Na(+)(out) + 2 H(+)(in). In terms of biological role, na(+)/H(+) antiporter that extrudes sodium in exchange for external protons. This is Na(+)/H(+) antiporter NhaA from Photorhabdus laumondii subsp. laumondii (strain DSM 15139 / CIP 105565 / TT01) (Photorhabdus luminescens subsp. laumondii).